The chain runs to 409 residues: Magnesium-protoporphyrin IX monomethyl ester [oxidative] cyclase, chloroplastic (409 aa).

2 disordered regions span residues M1–S23 and R36–E60. A chloroplast-targeting transit peptide spans M1–R36. The segment covering K13 to S23 has biased composition (polar residues).

It belongs to the AcsF family. In terms of assembly, part of the FLU-containing chloroplast membrane complex composed of FLU, CRD1, PORB, PORC, CHLP and HEMA1. Interacts with YCF54 in chloroplasts. Fe cation serves as cofactor.

It localises to the plastid. The protein localises to the chloroplast inner membrane. Its subcellular location is the chloroplast thylakoid membrane. It catalyses the reaction Mg-protoporphyrin IX 13-monomethyl ester + 3 NADPH + 3 O2 + 2 H(+) = 3,8-divinyl protochlorophyllide a + 3 NADP(+) + 5 H2O. It participates in porphyrin-containing compound metabolism; chlorophyll biosynthesis. Functionally, catalytic component of the MgProto monomethylester (MgProtoME) cyclase complex that catalyzes the formation of the isocyclic ring in chlorophyll biosynthesis. Mediates the cyclase reaction, which results in the formation of divinylprotochlorophyllide (Pchlide) characteristic of all chlorophylls from magnesium-protoporphyrin IX 13-monomethyl ester (MgPMME). The sequence is that of Magnesium-protoporphyrin IX monomethyl ester [oxidative] cyclase, chloroplastic from Arabidopsis thaliana (Mouse-ear cress).